The sequence spans 245 residues: Thiopurine S-methyltransferase (245 aa).

A Phosphoserine modification is found at Ser-14. S-adenosyl-L-methionine is bound at residue 29-40; it reads WQDKWVNGKTAF. Phe-40 serves as a coordination point for substrate. N6-acetyllysine is present on Lys-58. S-adenosyl-L-methionine-binding positions include Leu-69, Glu-90, 134–135, and Arg-152; that span reads SI.

It belongs to the class I-like SAM-binding methyltransferase superfamily. TPMT family. As to quaternary structure, monomer.

The protein localises to the cytoplasm. The catalysed reaction is S-adenosyl-L-methionine + a thiopurine = S-adenosyl-L-homocysteine + a thiopurine S-methylether.. The protein is Thiopurine S-methyltransferase (TPMT) of Chlorocebus aethiops (Green monkey).